A 94-amino-acid chain; its full sequence is Co-chaperonin GroES (94 aa).

This sequence belongs to the GroES chaperonin family. Heptamer of 7 subunits arranged in a ring. Interacts with the chaperonin GroEL.

It is found in the cytoplasm. In terms of biological role, together with the chaperonin GroEL, plays an essential role in assisting protein folding. The GroEL-GroES system forms a nano-cage that allows encapsulation of the non-native substrate proteins and provides a physical environment optimized to promote and accelerate protein folding. GroES binds to the apical surface of the GroEL ring, thereby capping the opening of the GroEL channel. This Lactobacillus acidophilus (strain ATCC 700396 / NCK56 / N2 / NCFM) protein is Co-chaperonin GroES.